The sequence spans 185 residues: Ribosome-recycling factor (185 aa).

A disordered region spans residues 136–161 (MDSLKTDEKKGEIGEDDRKRRETEVQ).

This sequence belongs to the RRF family.

The protein resides in the cytoplasm. Functionally, responsible for the release of ribosomes from messenger RNA at the termination of protein biosynthesis. May increase the efficiency of translation by recycling ribosomes from one round of translation to another. The polypeptide is Ribosome-recycling factor (Rhizorhabdus wittichii (strain DSM 6014 / CCUG 31198 / JCM 15750 / NBRC 105917 / EY 4224 / RW1) (Sphingomonas wittichii)).